The primary structure comprises 1448 residues: Gag-Pol polyprotein (1448 aa).

Gly2 carries N-myristoyl glycine; by host lipidation. Residues 16-22 (WEKIYLR) carry the Nuclear export signal motif. A Nuclear localization signal motif is present at residues 26-32 (KKKYMMK). Residues 107–116 (KMKAEQKEPE) are compositionally biased toward basic and acidic residues. The disordered stretch occupies residues 107 to 129 (KMKAEQKEPEPEQAAGAAAAPES). A compositionally biased stretch (low complexity) spans 118 to 128 (EQAAGAAAAPE). Residue Tyr135 is modified to Phosphotyrosine; by host. 2 CCHC-type zinc fingers span residues 393-410 (IKCF…NCKA) and 414-431 (KGCW…DCRS). Basic and acidic residues-rich tracts occupy residues 446–460 (REAR…KERA) and 473–490 (GEDH…DREL). The segment at 446–490 (REARKFPPDNNKERANSPSNRELWVSGGEDHTGDREGRKGEDREL) is disordered. One can recognise a Peptidase A2 domain in the interval 517 to 586 (KEALLDTGAD…TPVNIIGRNF (70 aa)). Residue Asp522 is the For protease activity; shared with dimeric partner of the active site. Positions 640–830 (EGKISRIGPE…PPFLWMGYEL (191 aa)) constitute a Reverse transcriptase domain. Mg(2+)-binding residues include Asp706, Asp781, and Asp782. The tract at residues 823–831 (FLWMGYELH) is RT 'primer grip'. A Tryptophan repeat motif motif is present at residues 994 to 1010 (WETWWTEYWQATWIPDW). The region spanning 1030 to 1153 (ISGAETYYVD…IDKLVSTGIR (124 aa)) is the RNase H type-1 domain. The Mg(2+) site is built by Asp1039, Glu1074, Asp1094, and Asp1145. The Integrase-type zinc finger occupies 1159–1200 (DGIDKAQEEHERYHSNWKAMASDFNLPPIVAKEIVASCDKCQ). Positions 1168, 1172, 1196, and 1199 each coordinate Zn(2+). The Integrase catalytic domain occupies 1210 to 1360 (INCSPGVWQL…TAGERIIDII (151 aa)). Asp1220 and Asp1272 together coordinate Mg(2+). Residues 1379–1426 (FRVYYRDSREPTWKGPAKLLWKGEGAVVIQDNGDIKVVPRRKAKIIRD) constitute a DNA-binding region (integrase-type).

As to quaternary structure, homotrimer. Interacts with gp41 (via C-terminus). In terms of assembly, homodimer. The active site consists of two apposed aspartic acid residues. Heterodimer of p66 RT and p51 RT (RT p66/p51). Heterodimerization of RT is essential for DNA polymerase activity. Despite the sequence identities, p66 RT and p51 RT have distinct folding. As to quaternary structure, homotetramer; may further associate as a homohexadecamer. The cofactor is Mg(2+). Post-translationally, specific enzymatic cleavages by the viral protease yield mature proteins. The protease is released by autocatalytic cleavage. The polyprotein is cleaved during and after budding, this process is termed maturation. Proteolytic cleavage of p66 RT removes the RNase H domain to yield the p51 RT subunit. Capsid protein p24 is phosphorylated.

The protein resides in the virion. The protein localises to the host nucleus. Its subcellular location is the host cytoplasm. It localises to the host cell membrane. It carries out the reaction Specific for a P1 residue that is hydrophobic, and P1' variable, but often Pro.. The enzyme catalyses Endohydrolysis of RNA in RNA/DNA hybrids. Three different cleavage modes: 1. sequence-specific internal cleavage of RNA. Human immunodeficiency virus type 1 and Moloney murine leukemia virus enzymes prefer to cleave the RNA strand one nucleotide away from the RNA-DNA junction. 2. RNA 5'-end directed cleavage 13-19 nucleotides from the RNA end. 3. DNA 3'-end directed cleavage 15-20 nucleotides away from the primer terminus.. The catalysed reaction is 3'-end directed exonucleolytic cleavage of viral RNA-DNA hybrid.. It catalyses the reaction DNA(n) + a 2'-deoxyribonucleoside 5'-triphosphate = DNA(n+1) + diphosphate. With respect to regulation, the viral protease is inhibited by many synthetic protease inhibitors (PIs), such as amprenavir, atazanavir, indinavir, loprinavir, nelfinavir, ritonavir and saquinavir. RT can be inhibited either by nucleoside RT inhibitors (NRTIs) or by non nucleoside RT inhibitors (NNRTIs). NRTIs act as chain terminators, whereas NNRTIs inhibit DNA polymerization by binding a small hydrophobic pocket near the RT active site and inducing an allosteric change in this region. Classical NRTIs are abacavir, adefovir (PMEA), didanosine (ddI), lamivudine (3TC), stavudine (d4T), tenofovir (PMPA), zalcitabine (ddC), and zidovudine (AZT). Classical NNRTIs are atevirdine (BHAP U-87201E), delavirdine, efavirenz (DMP-266), emivirine (I-EBU), and nevirapine (BI-RG-587). The tritherapies used as a basic effective treatment of AIDS associate two NRTIs and one NNRTI. Use of protease inhibitors in tritherapy regimens permit more ambitious therapeutic strategies. Functionally, gag-Pol polyprotein and Gag polyprotein may regulate their own translation, by the binding genomic RNA in the 5'-UTR. At low concentration, Gag-Pol and Gag would promote translation, whereas at high concentration, the polyproteins encapsidate genomic RNA and then shut off translation. In terms of biological role, matrix protein p17 has two main functions: in infected cell, it targets Gag and Gag-pol polyproteins to the plasma membrane via a multipartite membrane-binding signal, that includes its myristointegration complex. The myristoylation signal and the NLS exert conflicting influences its subcellular localization. The key regulation of these motifs might be phosphorylation of a portion of MA molecules on the C-terminal tyrosine at the time of virus maturation, by virion-associated cellular tyrosine kinase. Implicated in the release from host cell mediated by Vpu. Its function is as follows. Capsid protein p24 forms the conical core that encapsulates the genomic RNA-nucleocapsid complex in the virion. The core is constituted by capsid protein hexamer subunits. The core is disassembled soon after virion entry. Interaction with host PPIA/CYPA protects the virus from restriction by host TRIM5-alpha and from an unknown antiviral activity in host cells. This capsid restriction by TRIM5 is one of the factors which restricts SIV to the simian species. Nucleocapsid protein p7 encapsulates and protects viral dimeric unspliced (genomic) RNA. Binds these RNAs through its zinc fingers. Facilitates rearangement of nucleic acid secondary structure during retrotranscription of genomic RNA. This capability is referred to as nucleic acid chaperone activity. Functionally, the aspartyl protease mediates proteolytic cleavages of Gag and Gag-Pol polyproteins during or shortly after the release of the virion from the plasma membrane. Cleavages take place as an ordered, step-wise cascade to yield mature proteins. This process is called maturation. Displays maximal activity during the budding process just prior to particle release from the cell. Also cleaves Nef and Vif, probably concomitantly with viral structural proteins on maturation of virus particles. Hydrolyzes host EIF4GI and PABP1 in order to shut off the capped cellular mRNA translation. The resulting inhibition of cellular protein synthesis serves to ensure maximal viral gene expression and to evade host immune response. In terms of biological role, reverse transcriptase/ribonuclease H (RT) is a multifunctional enzyme that converts the viral dimeric RNA genome into dsDNA in the cytoplasm, shortly after virus entry into the cell. This enzyme displays a DNA polymerase activity that can copy either DNA or RNA templates, and a ribonuclease H (RNase H) activity that cleaves the RNA strand of RNA-DNA heteroduplexes in a partially processive 3' to 5' endonucleasic mode. Conversion of viral genomic RNA into dsDNA requires many steps. A tRNA binds to the primer-binding site (PBS) situated at the 5'-end of the viral RNA. RT uses the 3' end of the tRNA primer to perform a short round of RNA-dependent minus-strand DNA synthesis. The reading proceeds through the U5 region and ends after the repeated (R) region which is present at both ends of viral RNA. The portion of the RNA-DNA heteroduplex is digested by the RNase H, resulting in a ssDNA product attached to the tRNA primer. This ssDNA/tRNA hybridizes with the identical R region situated at the 3' end of viral RNA. This template exchange, known as minus-strand DNA strong stop transfer, can be either intra- or intermolecular. RT uses the 3' end of this newly synthesized short ssDNA to perform the RNA-dependent minus-strand DNA synthesis of the whole template. RNase H digests the RNA template except for two polypurine tracts (PPTs) situated at the 5'-end and near the center of the genome. It is not clear if both polymerase and RNase H activities are simultaneous. RNase H can probably proceed both in a polymerase-dependent (RNA cut into small fragments by the same RT performing DNA synthesis) and a polymerase-independent mode (cleavage of remaining RNA fragments by free RTs). Secondly, RT performs DNA-directed plus-strand DNA synthesis using the PPTs that have not been removed by RNase H as primers. PPTs and tRNA primers are then removed by RNase H. The 3' and 5' ssDNA PBS regions hybridize to form a circular dsDNA intermediate. Strand displacement synthesis by RT to the PBS and PPT ends produces a blunt ended, linear dsDNA copy of the viral genome that includes long terminal repeats (LTRs) at both ends. Its function is as follows. Integrase catalyzes viral DNA integration into the host chromosome, by performing a series of DNA cutting and joining reactions. This enzyme activity takes place after virion entry into a cell and reverse transcription of the RNA genome in dsDNA. The first step in the integration process is 3' processing. This step requires a complex comprising the viral genome, matrix protein, Vpr and integrase. This complex is called the pre-integration complex (PIC). The integrase protein removes 2 nucleotides from each 3' end of the viral DNA, leaving recessed CA OH's at the 3' ends. In the second step, the PIC enters cell nucleus. This process is mediated through integrase and Vpr proteins, and allows the virus to infect a non dividing cell. This ability to enter the nucleus is specific of lentiviruses, other retroviruses cannot and rely on cell division to access cell chromosomes. In the third step, termed strand transfer, the integrase protein joins the previously processed 3' ends to the 5' ends of strands of target cellular DNA at the site of integration. The 5'-ends are produced by integrase-catalyzed staggered cuts, 5 bp apart. A Y-shaped, gapped, recombination intermediate results, with the 5'-ends of the viral DNA strands and the 3' ends of target DNA strands remaining unjoined, flanking a gap of 5 bp. The last step is viral DNA integration into host chromosome. This involves host DNA repair synthesis in which the 5 bp gaps between the unjoined strands are filled in and then ligated. Since this process occurs at both cuts flanking the SIV genome, a 5 bp duplication of host DNA is produced at the ends of SIV integration. Alternatively, Integrase may catalyze the excision of viral DNA just after strand transfer, this is termed disintegration. The polypeptide is Gag-Pol polyprotein (gag-pol) (Pan troglodytes (Chimpanzee)).